A 441-amino-acid polypeptide reads, in one-letter code: Ribosomal protein uS12 methylthiotransferase RimO (441 aa).

One can recognise an MTTase N-terminal domain in the interval 8–118 (PKIGFVSLGC…VLQHVHHYVP (111 aa)). Residues Cys-17, Cys-53, Cys-82, Cys-150, Cys-154, and Cys-157 each contribute to the [4Fe-4S] cluster site. The Radical SAM core domain maps to 136–373 (LTPRHYAYLK…MQLQQQISAE (238 aa)). Positions 376–441 (QEKVGREILV…DEYDLWGSRV (66 aa)) constitute a TRAM domain.

Belongs to the methylthiotransferase family. RimO subfamily. [4Fe-4S] cluster is required as a cofactor.

Its subcellular location is the cytoplasm. It carries out the reaction L-aspartate(89)-[ribosomal protein uS12]-hydrogen + (sulfur carrier)-SH + AH2 + 2 S-adenosyl-L-methionine = 3-methylsulfanyl-L-aspartate(89)-[ribosomal protein uS12]-hydrogen + (sulfur carrier)-H + 5'-deoxyadenosine + L-methionine + A + S-adenosyl-L-homocysteine + 2 H(+). Functionally, catalyzes the methylthiolation of an aspartic acid residue of ribosomal protein uS12. This Salmonella paratyphi A (strain ATCC 9150 / SARB42) protein is Ribosomal protein uS12 methylthiotransferase RimO.